The following is a 282-amino-acid chain: tRNA (guanine-N(7)-)-methyltransferase (282 aa).

The interval 1–36 (MAGPPNKKQKREDYRTARENGEESKELPKKKFYRQR) is disordered. Residues 10 to 29 (KREDYRTARENGEESKELPK) are compositionally biased toward basic and acidic residues. Residues G100, 123 to 124 (EI), 158 to 159 (NT), and C178 contribute to the S-adenosyl-L-methionine site. D181 is an active-site residue. 256–258 (TEE) contacts S-adenosyl-L-methionine.

The protein belongs to the class I-like SAM-binding methyltransferase superfamily. TrmB family. As to quaternary structure, forms a complex with trm82.

The protein resides in the nucleus. It catalyses the reaction guanosine(46) in tRNA + S-adenosyl-L-methionine = N(7)-methylguanosine(46) in tRNA + S-adenosyl-L-homocysteine. It functions in the pathway tRNA modification; N(7)-methylguanine-tRNA biosynthesis. Functionally, catalyzes the formation of N(7)-methylguanine at position 46 (m7G46) in tRNA. This is tRNA (guanine-N(7)-)-methyltransferase (trm8) from Botryotinia fuckeliana (strain B05.10) (Noble rot fungus).